The chain runs to 466 residues: Ribulose bisphosphate carboxylase large chain (466 aa).

K5 is modified (N6,N6,N6-trimethyllysine). Residues N114 and T164 each coordinate substrate. K166 functions as the Proton acceptor in the catalytic mechanism. K168 is a substrate binding site. Mg(2+) is bound by residues K192, D194, and E195. The residue at position 192 (K192) is an N6-carboxylysine. H285 acts as the Proton acceptor in catalysis. Residues R286, H318, and S370 each coordinate substrate.

Belongs to the RuBisCO large chain family. Type I subfamily. Heterohexadecamer of 8 large chains and 8 small chains; disulfide-linked. The disulfide link is formed within the large subunit homodimers. Mg(2+) serves as cofactor. In terms of processing, the disulfide bond which can form in the large chain dimeric partners within the hexadecamer appears to be associated with oxidative stress and protein turnover.

It localises to the plastid. The protein resides in the chloroplast. The enzyme catalyses 2 (2R)-3-phosphoglycerate + 2 H(+) = D-ribulose 1,5-bisphosphate + CO2 + H2O. It carries out the reaction D-ribulose 1,5-bisphosphate + O2 = 2-phosphoglycolate + (2R)-3-phosphoglycerate + 2 H(+). In terms of biological role, ruBisCO catalyzes two reactions: the carboxylation of D-ribulose 1,5-bisphosphate, the primary event in carbon dioxide fixation, as well as the oxidative fragmentation of the pentose substrate in the photorespiration process. Both reactions occur simultaneously and in competition at the same active site. This chain is Ribulose bisphosphate carboxylase large chain, found in Drosera peltata (Pale sundew).